A 214-amino-acid polypeptide reads, in one-letter code: Cell division protein SepF (214 aa).

The interval tyrosine 23–tyrosine 70 is disordered. Basic and acidic residues predominate over residues proline 36–alanine 58.

The protein belongs to the SepF family. Homodimer. Interacts with FtsZ.

The protein localises to the cytoplasm. Cell division protein that is part of the divisome complex and is recruited early to the Z-ring. Probably stimulates Z-ring formation, perhaps through the cross-linking of FtsZ protofilaments. Its function overlaps with FtsA. This is Cell division protein SepF from Mycobacterium avium (strain 104).